The following is a 580-amino-acid chain: Isochorismate synthase, chloroplastic (580 aa).

The N-terminal 91 residues, 1 to 91 (MASITGHCVA…LAMERLSSAV (91 aa)), are a transit peptide targeting the chloroplast.

Belongs to the isochorismate synthase family. The cofactor is Mg(2+).

The protein resides in the plastid. The protein localises to the chloroplast. The enzyme catalyses chorismate = isochorismate. Its activity is regulated as follows. Not inhibited by Tyr, Phe or Trp. In terms of biological role, involved in the synthesis of o-succinylbenzoic acid, 2,3-dihydroxybenzoic acid and salicylic acid (SA). The protein is Isochorismate synthase, chloroplastic of Catharanthus roseus (Madagascar periwinkle).